The primary structure comprises 296 residues: Porphobilinogen deaminase (296 aa).

At C232 the chain carries S-(dipyrrolylmethanemethyl)cysteine.

The protein belongs to the HMBS family. In terms of assembly, monomer. The cofactor is dipyrromethane.

The catalysed reaction is 4 porphobilinogen + H2O = hydroxymethylbilane + 4 NH4(+). It participates in porphyrin-containing compound metabolism; protoporphyrin-IX biosynthesis; coproporphyrinogen-III from 5-aminolevulinate: step 2/4. Tetrapolymerization of the monopyrrole PBG into the hydroxymethylbilane pre-uroporphyrinogen in several discrete steps. The sequence is that of Porphobilinogen deaminase from Corynebacterium aurimucosum (strain ATCC 700975 / DSM 44827 / CIP 107346 / CN-1) (Corynebacterium nigricans).